A 194-amino-acid polypeptide reads, in one-letter code: 7-methyl-GTP pyrophosphatase (194 aa).

Asp-69 (proton acceptor) is an active-site residue.

It belongs to the Maf family. YceF subfamily. It depends on a divalent metal cation as a cofactor.

It is found in the cytoplasm. It catalyses the reaction N(7)-methyl-GTP + H2O = N(7)-methyl-GMP + diphosphate + H(+). Its function is as follows. Nucleoside triphosphate pyrophosphatase that hydrolyzes 7-methyl-GTP (m(7)GTP). May have a dual role in cell division arrest and in preventing the incorporation of modified nucleotides into cellular nucleic acids. The chain is 7-methyl-GTP pyrophosphatase (yceF1) from Salmonella choleraesuis (strain SC-B67).